The primary structure comprises 103 residues: NADH-quinone oxidoreductase subunit K 1 (103 aa).

3 helical membrane-spanning segments follow: residues 7–27 (ISWF…GFLF), 31–51 (IITV…SFVT), and 63–83 (LFTF…LAII).

Belongs to the complex I subunit 4L family. NDH-1 is composed of 14 different subunits. Subunits NuoA, H, J, K, L, M, N constitute the membrane sector of the complex.

It localises to the cell inner membrane. The enzyme catalyses a quinone + NADH + 5 H(+)(in) = a quinol + NAD(+) + 4 H(+)(out). NDH-1 shuttles electrons from NADH, via FMN and iron-sulfur (Fe-S) centers, to quinones in the respiratory chain. The immediate electron acceptor for the enzyme in this species is believed to be ubiquinone. Couples the redox reaction to proton translocation (for every two electrons transferred, four hydrogen ions are translocated across the cytoplasmic membrane), and thus conserves the redox energy in a proton gradient. The sequence is that of NADH-quinone oxidoreductase subunit K 1 from Solibacter usitatus (strain Ellin6076).